We begin with the raw amino-acid sequence, 333 residues long: GTPase Obg (333 aa).

Positions 1-159 (MQFIDLAEIH…RHLRLELKLL (159 aa)) constitute an Obg domain. Positions 160–328 (AEVGIIGLPN…LLEAVWQELG (169 aa)) constitute an OBG-type G domain. GTP contacts are provided by residues 166–173 (GLPNAGKS), 191–195 (FTTLV), 213–216 (DIPG), 280–283 (NKID), and 309–311 (SAV). Mg(2+)-binding residues include serine 173 and threonine 193.

It belongs to the TRAFAC class OBG-HflX-like GTPase superfamily. OBG GTPase family. As to quaternary structure, monomer. It depends on Mg(2+) as a cofactor.

The protein resides in the cytoplasm. Its function is as follows. An essential GTPase which binds GTP, GDP and possibly (p)ppGpp with moderate affinity, with high nucleotide exchange rates and a fairly low GTP hydrolysis rate. Plays a role in control of the cell cycle, stress response, ribosome biogenesis and in those bacteria that undergo differentiation, in morphogenesis control. This Thermosynechococcus vestitus (strain NIES-2133 / IAM M-273 / BP-1) protein is GTPase Obg.